A 554-amino-acid chain; its full sequence is Outer envelope protein 61 (554 aa).

Over 1 to 525 the chain is Cytoplasmic; it reads MFNGLMDPEM…GMEKAKKAKK (525 aa). 2 TPR repeats span residues 103 to 136 and 180 to 213; these read AQMLKKQGNELHSRGNFSDAAEKYLRAKNNLKEI and VKALYRRGQAYRDLGLFEDAVSDLSKAHEVSPED. 2 disordered regions span residues 245 to 269 and 395 to 439; these read TEENNVTSGENKKPSKEANGHAQGV and APAS…PSAP. The segment covering 254 to 263 has biased composition (basic and acidic residues); that stretch reads ENKKPSKEAN. Residues 412–423 show a composition bias toward low complexity; that stretch reads SLGASGSSSGNS. The chain crosses the membrane as a helical span at residues 526-546; that stretch reads WLFGKGGLIFAILMLVLAMVL. At 547 to 554 the chain is on the lumenal side; it reads HRLGYIGN.

As to quaternary structure, interacts (via TPR region) with HSP70-1, but not with HSP90-2. Interacts with ERDJ2A and ERDJ2B. In the ER membrane, associates with ERDJ2 in membrane complexes of 140 and 200 kDa and specifically interacts with the HSP70 and HSP90 chaperones via its TPR domain. In terms of tissue distribution, ubiquitous. Highest expression in leaves and lowest in roots.

It localises to the endoplasmic reticulum membrane. The protein localises to the plastid. Its subcellular location is the chloroplast outer membrane. In terms of biological role, plays a role in protein import into the endoplasmic reticulum (ER). May function as chaperone docking protein during post-translational protein translocation into the ER. Chaperone receptor mediating Hsp70-dependent protein targeting to chloroplasts. Interacts specifically with some chloroplast precursors, but not with mitochondrial precursors. Able to select precursors for delivery to the chloroplast translocase independently of Hsp70. The sequence is that of Outer envelope protein 61 (OEP61) from Arabidopsis thaliana (Mouse-ear cress).